Consider the following 336-residue polypeptide: Dihydroorotate dehydrogenase (quinone) (336 aa).

FMN contacts are provided by residues 62–66 and Thr86; that span reads AGLDK. Lys66 is a binding site for substrate. 111-115 provides a ligand contact to substrate; it reads NRMGF. FMN contacts are provided by Asn139 and Asn172. Asn172 contacts substrate. Ser175 (nucleophile) is an active-site residue. Asn177 contributes to the substrate binding site. Positions 217 and 245 each coordinate FMN. A substrate-binding site is contributed by 246–247; sequence NT. FMN is bound by residues Gly268, Gly297, and 318–319; that span reads YS.

This sequence belongs to the dihydroorotate dehydrogenase family. Type 2 subfamily. In terms of assembly, monomer. It depends on FMN as a cofactor.

Its subcellular location is the cell membrane. The catalysed reaction is (S)-dihydroorotate + a quinone = orotate + a quinol. It functions in the pathway pyrimidine metabolism; UMP biosynthesis via de novo pathway; orotate from (S)-dihydroorotate (quinone route): step 1/1. Catalyzes the conversion of dihydroorotate to orotate with quinone as electron acceptor. This Escherichia coli (strain UTI89 / UPEC) protein is Dihydroorotate dehydrogenase (quinone).